The sequence spans 450 residues: Tubulin alpha chain (450 aa).

Glutamine 11 contacts GTP. Position 40 is an N6-acetyllysine (lysine 40). GTP contacts are provided by glutamate 71, serine 140, glycine 144, threonine 145, threonine 179, asparagine 206, and asparagine 228. Glutamate 71 contributes to the Mg(2+) binding site. Glutamate 254 is an active-site residue.

It belongs to the tubulin family. In terms of assembly, dimer of alpha and beta chains. A typical microtubule is a hollow water-filled tube with an outer diameter of 25 nm and an inner diameter of 15 nM. Alpha-beta heterodimers associate head-to-tail to form protofilaments running lengthwise along the microtubule wall with the beta-tubulin subunit facing the microtubule plus end conferring a structural polarity. Microtubules usually have 13 protofilaments but different protofilament numbers can be found in some organisms and specialized cells. Mg(2+) serves as cofactor. Undergoes a tyrosination/detyrosination cycle, the cyclic removal and re-addition of a C-terminal tyrosine residue by the enzymes tubulin tyrosine carboxypeptidase (TTCP) and tubulin tyrosine ligase (TTL), respectively. In terms of processing, acetylation of alpha chains at Lys-40 stabilizes microtubules and affects affinity and processivity of microtubule motors. This modification has a role in multiple cellular functions, ranging from cell motility, cell cycle progression or cell differentiation to intracellular trafficking and signaling.

The protein resides in the cytoplasm. Its subcellular location is the cytoskeleton. The enzyme catalyses GTP + H2O = GDP + phosphate + H(+). In terms of biological role, tubulin is the major constituent of microtubules, a cylinder consisting of laterally associated linear protofilaments composed of alpha- and beta-tubulin heterodimers. Microtubules grow by the addition of GTP-tubulin dimers to the microtubule end, where a stabilizing cap forms. Below the cap, tubulin dimers are in GDP-bound state, owing to GTPase activity of alpha-tubulin. The chain is Tubulin alpha chain from Lepidoglyphus destructor (Storage mite).